Reading from the N-terminus, the 280-residue chain is Dermonecrotic toxin LsSicTox-alphaIA1 (280 aa).

H12 is an active-site residue. Mg(2+)-binding residues include E32 and D34. The active-site Nucleophile is H48. Intrachain disulfides connect C52–C58 and C54–C197. D92 is a Mg(2+) binding site.

This sequence belongs to the arthropod phospholipase D family. Class II subfamily. Requires Mg(2+) as cofactor. Expressed by the venom gland.

The protein localises to the secreted. The enzyme catalyses an N-(acyl)-sphingosylphosphocholine = an N-(acyl)-sphingosyl-1,3-cyclic phosphate + choline. It carries out the reaction an N-(acyl)-sphingosylphosphoethanolamine = an N-(acyl)-sphingosyl-1,3-cyclic phosphate + ethanolamine. It catalyses the reaction a 1-acyl-sn-glycero-3-phosphocholine = a 1-acyl-sn-glycero-2,3-cyclic phosphate + choline. The catalysed reaction is a 1-acyl-sn-glycero-3-phosphoethanolamine = a 1-acyl-sn-glycero-2,3-cyclic phosphate + ethanolamine. In terms of biological role, dermonecrotic toxins cleave the phosphodiester linkage between the phosphate and headgroup of certain phospholipids (sphingolipid and lysolipid substrates), forming an alcohol (often choline) and a cyclic phosphate. This toxin acts on sphingomyelin (SM). It may also act on ceramide phosphoethanolamine (CPE), lysophosphatidylcholine (LPC) and lysophosphatidylethanolamine (LPE), but not on lysophosphatidylserine (LPS), and lysophosphatidylglycerol (LPG). It acts by transphosphatidylation, releasing exclusively cyclic phosphate products as second products. Induces dermonecrosis, hemolysis, increased vascular permeability, edema, inflammatory response, and platelet aggregation. The protein is Dermonecrotic toxin LsSicTox-alphaIA1 of Loxosceles similis (Brazilian brown spider).